Consider the following 583-residue polypeptide: Complement factor I (583 aa).

The N-terminal stretch at 1–18 (MKLLHVFLLFLCFHLSFC) is a signal peptide. 16 disulfides stabilise this stretch: Cys33-Cys255, Cys43-Cys54, Cys48-Cys59, Cys61-Cys93, Cys67-Cys86, Cys75-Cys106, Cys141-Cys181, Cys154-Cys214, Cys186-Cys196, Cys229-Cys247, Cys259-Cys271, Cys266-Cys284, Cys278-Cys293, Cys327-Cys453, Cys365-Cys381, and Cys373-Cys444. In terms of domain architecture, Kazal-like spans 55–108 (IEGTCICKLPYQCPKNGTTVCATNGRSFPTYCQQKSLECLRPGTKFLNNGTCTA). 4 N-linked (GlcNAc...) asparagine glycosylation sites follow: Asn70, Asn103, Asn173, and Asn177. Positions 114-212 (VSLKHGNTDS…TMGYQDLADV (99 aa)) constitute an SRCR domain. LDL-receptor class A domains follow at residues 213–257 (VCYT…LCCK) and 258–294 (ACQGKSFHCKSGVCIPSQYRCNGEVDCITGEDEVGCE). Ca(2+) is bound by residues Lys239, Asp242, Ile244, Asp246, Asp252, and Glu253. Ca(2+) contacts are provided by Tyr276, Asn279, Glu281, Asp283, Asp289, and Glu290. The Peptidase S1 domain maps to 340-574 (IVGGKRAQLG…YFDWISYHVG (235 aa)). Residues His380 and Asp429 each act as charge relay system in the active site. 2 N-linked (GlcNAc...) asparagine glycosylation sites follow: Asn464 and Asn494. 3 cysteine pairs are disulfide-bonded: Cys467–Cys531, Cys495–Cys510, and Cys521–Cys550. The active-site Charge relay system is Ser525. Residue Asn536 is glycosylated (N-linked (GlcNAc...) asparagine).

It belongs to the peptidase S1 family. Heterodimer of a light and heavy chains; disulfide-linked. The fully processed and mature protein circulates as a zymogen, and is allosterically activated by substrate-induced remodeling of the active site. In terms of tissue distribution, plasma.

The protein resides in the secreted. Its subcellular location is the extracellular space. It carries out the reaction Inactivates complement subcomponents C3b, iC3b and C4b by proteolytic cleavage.. Responsible for cleaving the alpha-chains of C4b and C3b in the presence of the cofactors C4-binding protein and factor H respectively. The protein is Complement factor I (CFI) of Pongo abelii (Sumatran orangutan).